An 823-amino-acid chain; its full sequence is Protein ROOT HAIR DEFECTIVE 3 homolog 2 (823 aa).

At 1–688 (MEVPISGGGG…EAHRRSNNWL (688 aa)) the chain is on the cytoplasmic side. The 216-residue stretch at 45–260 (GLSYAVVSIV…IAPGGLAADR (216 aa)) folds into the GB1/RHD3-type G domain. A GTP-binding site is contributed by 55 to 62 (GPQGSGKS). The stretch at 226-246 (LSSYEEKENLFKEQVGQLRQR) forms a coiled coil. A helical membrane pass occupies residues 689 to 709 (PPAWTVLLLAILGYNEFIFLL). The Lumenal portion of the chain corresponds to 710–712 (RNP). A helical membrane pass occupies residues 713–733 (LYLLGLFVAFVVSYAAWLQYD). The Cytoplasmic portion of the chain corresponds to 734–823 (ITAYFRHGTL…SVGSNSDDES (90 aa)). The tract at residues 770–823 (NQKSSSHPPRHRPPLHPQSFRNQAQQQSQAQVQYQAPSSLSSSSSVGSNSDDES) is disordered. Residues 786 to 823 (PQSFRNQAQQQSQAQVQYQAPSSLSSSSSVGSNSDDES) are compositionally biased toward low complexity.

Belongs to the TRAFAC class dynamin-like GTPase superfamily. GB1/RHD3 GTPase family. RHD3 subfamily.

The protein resides in the endoplasmic reticulum membrane. Its function is as follows. Probable GTP-binding protein that may be involved in cell development. The protein is Protein ROOT HAIR DEFECTIVE 3 homolog 2 of Oryza sativa subsp. japonica (Rice).